Consider the following 42-residue polypeptide: Photosystem II reaction center protein J (42 aa).

Residues 10-30 (IPLWLVGTVAGTAALTLVAVF) traverse the membrane as a helical segment.

This sequence belongs to the PsbJ family. In terms of assembly, PSII is composed of 1 copy each of membrane proteins PsbA, PsbB, PsbC, PsbD, PsbE, PsbF, PsbH, PsbI, PsbJ, PsbK, PsbL, PsbM, PsbT, PsbX, PsbY, PsbZ, Psb30/Ycf12, at least 3 peripheral proteins of the oxygen-evolving complex and a large number of cofactors. It forms dimeric complexes.

It is found in the plastid. It localises to the chloroplast thylakoid membrane. Its function is as follows. One of the components of the core complex of photosystem II (PSII). PSII is a light-driven water:plastoquinone oxidoreductase that uses light energy to abstract electrons from H(2)O, generating O(2) and a proton gradient subsequently used for ATP formation. It consists of a core antenna complex that captures photons, and an electron transfer chain that converts photonic excitation into a charge separation. The polypeptide is Photosystem II reaction center protein J (Chlorella vulgaris (Green alga)).